A 367-amino-acid polypeptide reads, in one-letter code: Alginate lyase (367 aa).

A signal peptide spans 1–24 (MTAFKRIFSPALLVLALYGGAAHA). Substrate is bound by residues 63–64 (SK), 136–137 (HT), and Y254.

Belongs to the polysaccharide lyase 5 family.

The protein resides in the periplasm. The catalysed reaction is Eliminative cleavage of alginate to give oligosaccharides with 4-deoxy-alpha-L-erythro-hex-4-enuronosyl groups at their non-reducing ends and beta-D-mannuronate at their reducing end.. Its function is as follows. Catalyzes the depolymerization of alginate by cleaving the beta-1,4 glycosidic bond between two adjacent sugar residues via a beta-elimination mechanism. May serve to degrade mislocalized alginate that is trapped in the periplasmic space. In Pseudomonas putida (strain W619), this protein is Alginate lyase.